Consider the following 381-residue polypeptide: RING-H2 finger protein ATL1 (381 aa).

Positions 1 to 31 (MDLTDRRNPFNNLVFPPPPPPPSTTFTSPIF) are disordered. A helical membrane pass occupies residues 46–66 (IAVIGILATAFLLVSYYIFVI). Residues 134–176 (CSVCLNEFQEDEKLRIIPNCCHVFHIDCIDIWLQGNANCPLCR) form an RING-type; atypical zinc finger. Disordered regions lie at residues 249-269 (TSNEVSTGNSPKSVSPLPIKF) and 334-354 (RQIPVAGDGEDSSSSGGGNSR). Residues 250-261 (SNEVSTGNSPKS) show a composition bias toward polar residues.

The protein belongs to the RING-type zinc finger family. ATL subfamily.

It is found in the membrane. It carries out the reaction S-ubiquitinyl-[E2 ubiquitin-conjugating enzyme]-L-cysteine + [acceptor protein]-L-lysine = [E2 ubiquitin-conjugating enzyme]-L-cysteine + N(6)-ubiquitinyl-[acceptor protein]-L-lysine.. It functions in the pathway protein modification; protein ubiquitination. The polypeptide is RING-H2 finger protein ATL1 (ATL1) (Arabidopsis thaliana (Mouse-ear cress)).